The sequence spans 421 residues: Peroxisomal succinyl-coenzyme A thioesterase (421 aa).

Ser-232 functions as the Charge relay system in the catalytic mechanism. N6-succinyllysine is present on Lys-313. Residues Asp-326 and His-360 each act as charge relay system in the active site. The Microbody targeting signal motif lies at 419–421 (CRL).

It belongs to the C/M/P thioester hydrolase family. In terms of tissue distribution, mainly expressed in liver and kidney. Weakly expressed in other tissues including intestine, adrenal gland and adipose tissues.

It is found in the peroxisome. It carries out the reaction succinyl-CoA + H2O = succinate + CoA + H(+). The enzyme catalyses glutaryl-CoA + H2O = glutarate + CoA + H(+). Its pathway is lipid metabolism; fatty acid metabolism. Catalyzes the hydrolysis of acyl-CoAs into free fatty acids and coenzyme A (CoASH), regulating their respective intracellular levels. In contrast to its human ortholog, functions essentially as a succinyl-CoA thioesterase with no activity with medium to long chain saturated acyl-CoAs and with a low activity toward glutaryl-CoA. The protein is Peroxisomal succinyl-coenzyme A thioesterase (Acot4) of Mus musculus (Mouse).